Here is a 270-residue protein sequence, read N- to C-terminus: Putative phosphoenolpyruvate synthase regulatory protein (270 aa).

Residue 150–157 participates in ADP binding; the sequence is GVSRCGKT.

Belongs to the pyruvate, phosphate/water dikinase regulatory protein family. PSRP subfamily.

The enzyme catalyses [pyruvate, water dikinase] + ADP = [pyruvate, water dikinase]-phosphate + AMP + H(+). It carries out the reaction [pyruvate, water dikinase]-phosphate + phosphate + H(+) = [pyruvate, water dikinase] + diphosphate. Bifunctional serine/threonine kinase and phosphorylase involved in the regulation of the phosphoenolpyruvate synthase (PEPS) by catalyzing its phosphorylation/dephosphorylation. This Shewanella halifaxensis (strain HAW-EB4) protein is Putative phosphoenolpyruvate synthase regulatory protein.